Consider the following 90-residue polypeptide: Kunitz-type serine protease inhibitor bitisilin-2 (90 aa).

The first 24 residues, 1–24 (MSSGGLLLLLGLLTLWAELTPVSG), serve as a signal peptide directing secretion. A BPTI/Kunitz inhibitor domain is found at 31 to 81 (CYLPADTGPCMANFPRFYYDSASKKCKKFTYGGCHGNANNFETREECRKKC). 3 disulfide bridges follow: cysteine 31-cysteine 81, cysteine 40-cysteine 64, and cysteine 56-cysteine 77.

Belongs to the venom Kunitz-type family. Expressed by the venom gland.

The protein resides in the secreted. Its function is as follows. Serine protease inhibitor. The polypeptide is Kunitz-type serine protease inhibitor bitisilin-2 (Bitis gabonica (Gaboon adder)).